Reading from the N-terminus, the 83-residue chain is U-actitoxin-Avd8d (83 aa).

A signal peptide spans 1–19 (MASTRLFVLLVIGTVLLCQ). A propeptide spanning residues 20–38 (VSGFLDELLAEHELPQDMT) is cleaved from the precursor.

Belongs to the sea anemone 8 toxin family.

Its subcellular location is the secreted. It localises to the nematocyst. This Anemonia viridis (Snakelocks anemone) protein is U-actitoxin-Avd8d.